We begin with the raw amino-acid sequence, 392 residues long: ATP phosphoribosyltransferase regulatory subunit (392 aa).

This sequence belongs to the class-II aminoacyl-tRNA synthetase family. HisZ subfamily. Heteromultimer composed of HisG and HisZ subunits.

The protein resides in the cytoplasm. It functions in the pathway amino-acid biosynthesis; L-histidine biosynthesis; L-histidine from 5-phospho-alpha-D-ribose 1-diphosphate: step 1/9. In terms of biological role, required for the first step of histidine biosynthesis. May allow the feedback regulation of ATP phosphoribosyltransferase activity by histidine. The polypeptide is ATP phosphoribosyltransferase regulatory subunit (Listeria monocytogenes serotype 4b (strain F2365)).